A 373-amino-acid polypeptide reads, in one-letter code: Indole glucosinolate O-methyltransferase 2 (373 aa).

Residues Gly-217, Asp-240, Asp-260, Met-261, and Lys-274 each contribute to the S-adenosyl-L-homocysteine site. The active-site Proton acceptor is His-278.

The protein belongs to the class I-like SAM-binding methyltransferase superfamily. Cation-independent O-methyltransferase family.

Its pathway is secondary metabolite biosynthesis. Involved in indole glucosinolate biosynthesis. Catalyzes methoxylation reactions of the glucosinolate indole ring. Converts the hydroxy intermediates 4-hydroxy-indol-3-yl-methylglucosinolate (4OH-I3M) and 1-hydroxy-indol-3-yl-methylglucosinolate (1OH-I3M) to 4-methoxy-indol-3-yl-methylglucosinolate (4MO-I3M) and 1-methoxy-indol-3-yl-methylglucosinolate (1MO-I3M), respectively. The polypeptide is Indole glucosinolate O-methyltransferase 2 (Arabidopsis thaliana (Mouse-ear cress)).